Here is a 122-residue protein sequence, read N- to C-terminus: Large ribosomal subunit protein uL14c (122 aa).

This sequence belongs to the universal ribosomal protein uL14 family. As to quaternary structure, part of the 50S ribosomal subunit.

It localises to the plastid. The protein resides in the chloroplast. In terms of biological role, binds to 23S rRNA. The chain is Large ribosomal subunit protein uL14c from Panax ginseng (Korean ginseng).